Consider the following 253-residue polypeptide: Ubiquinone biosynthesis O-methyltransferase (253 aa).

Arg41, Gly72, Asp93, and Met136 together coordinate S-adenosyl-L-methionine.

The protein belongs to the methyltransferase superfamily. UbiG/COQ3 family.

The catalysed reaction is a 3-demethylubiquinol + S-adenosyl-L-methionine = a ubiquinol + S-adenosyl-L-homocysteine + H(+). It carries out the reaction a 3-(all-trans-polyprenyl)benzene-1,2-diol + S-adenosyl-L-methionine = a 2-methoxy-6-(all-trans-polyprenyl)phenol + S-adenosyl-L-homocysteine + H(+). It participates in cofactor biosynthesis; ubiquinone biosynthesis. O-methyltransferase that catalyzes the 2 O-methylation steps in the ubiquinone biosynthetic pathway. The chain is Ubiquinone biosynthesis O-methyltransferase from Chelativorans sp. (strain BNC1).